The primary structure comprises 231 residues: Uracil phosphoribosyltransferase (231 aa).

38 to 42 (KGLVR) contributes to the GTP binding site. 5-phospho-alpha-D-ribose 1-diphosphate is bound by residues arginine 87, arginine 112, and 140–148 (DPMIATGST). Uracil-binding positions include isoleucine 203 and 208–210 (GDA). Aspartate 209 provides a ligand contact to 5-phospho-alpha-D-ribose 1-diphosphate.

Belongs to the UPRTase family. It depends on Mg(2+) as a cofactor.

It catalyses the reaction UMP + diphosphate = 5-phospho-alpha-D-ribose 1-diphosphate + uracil. The protein operates within pyrimidine metabolism; UMP biosynthesis via salvage pathway; UMP from uracil: step 1/1. With respect to regulation, allosterically activated by GTP. Catalyzes the conversion of uracil and 5-phospho-alpha-D-ribose 1-diphosphate (PRPP) to UMP and diphosphate. This Methanococcus maripaludis (strain C7 / ATCC BAA-1331) protein is Uracil phosphoribosyltransferase.